The primary structure comprises 106 residues: Small ribosomal subunit protein uS10 (106 aa).

This sequence belongs to the universal ribosomal protein uS10 family. In terms of assembly, part of the 30S ribosomal subunit.

Involved in the binding of tRNA to the ribosomes. This is Small ribosomal subunit protein uS10 from Hyphomonas neptunium (strain ATCC 15444).